A 131-amino-acid chain; its full sequence is Profilin-2 (131 aa).

Belongs to the profilin family. In terms of assembly, occurs in many kinds of cells as a complex with monomeric actin in a 1:1 ratio.

The protein resides in the cytoplasm. Its subcellular location is the cytoskeleton. In terms of biological role, binds to actin and affects the structure of the cytoskeleton. At high concentrations, profilin prevents the polymerization of actin, whereas it enhances it at low concentrations. By binding to PIP2, it inhibits the formation of IP3 and DG. This chain is Profilin-2 (PRO2), found in Triticum aestivum (Wheat).